Consider the following 265-residue polypeptide: Mlc titration factor A (265 aa).

Positions 111, 148, 152, and 211 each coordinate Zn(2+).

The protein belongs to the MtfA family. As to quaternary structure, monomer in solution. Interacts with Mlc. Zn(2+) is required as a cofactor.

Its subcellular location is the cytoplasm. Its activity is regulated as follows. Association between Mlc and MtfA may induce structural changes that activate the peptidase activity of MtfA while inactivating the DNA-binding ability of Mlc. The aminopeptidase activity is partially inhibited by metal chelators such as EDTA and phenantroline, but not by inhibitors for serine-, aspartyl-, or cysteine-proteases. Its function is as follows. Involved in the modulation of the activity of the glucose-phosphotransferase system (glucose-PTS). Interacts with the transcriptional repressor Mlc, preventing its interaction with DNA and leading to the modulation of expression of genes regulated by Mlc, including ptsG, which encodes the PTS system glucose-specific EIICB component. Shows zinc-dependent metallopeptidase activity. In vitro, can cleave several artificial substrates. The highest activity is observed for L-alanine fused to 4-nitroanilide (L-alanine-pNA). Shows lower activity towards proline-pNA and valine-pNA. In Klebsiella pneumoniae subsp. pneumoniae (strain ATCC 700721 / MGH 78578), this protein is Mlc titration factor A.